A 356-amino-acid chain; its full sequence is S-adenosylmethionine:tRNA ribosyltransferase-isomerase (356 aa).

It belongs to the QueA family. In terms of assembly, monomer.

It localises to the cytoplasm. The catalysed reaction is 7-aminomethyl-7-carbaguanosine(34) in tRNA + S-adenosyl-L-methionine = epoxyqueuosine(34) in tRNA + adenine + L-methionine + 2 H(+). The protein operates within tRNA modification; tRNA-queuosine biosynthesis. Its function is as follows. Transfers and isomerizes the ribose moiety from AdoMet to the 7-aminomethyl group of 7-deazaguanine (preQ1-tRNA) to give epoxyqueuosine (oQ-tRNA). This is S-adenosylmethionine:tRNA ribosyltransferase-isomerase from Salmonella arizonae (strain ATCC BAA-731 / CDC346-86 / RSK2980).